A 138-amino-acid polypeptide reads, in one-letter code: Large ribosomal subunit protein uL16 (138 aa).

Belongs to the universal ribosomal protein uL16 family. In terms of assembly, part of the 50S ribosomal subunit.

Its function is as follows. Binds 23S rRNA and is also seen to make contacts with the A and possibly P site tRNAs. The sequence is that of Large ribosomal subunit protein uL16 from Ureaplasma urealyticum serovar 10 (strain ATCC 33699 / Western).